Consider the following 418-residue polypeptide: Serine hydroxymethyltransferase (418 aa).

Residues Leu-121 and 125–127 (GHL) each bind (6S)-5,6,7,8-tetrahydrofolate. Lys-230 is modified (N6-(pyridoxal phosphate)lysine). (6S)-5,6,7,8-tetrahydrofolate is bound at residue 356-358 (SPF).

This sequence belongs to the SHMT family. In terms of assembly, homodimer. Requires pyridoxal 5'-phosphate as cofactor.

It is found in the cytoplasm. It catalyses the reaction (6R)-5,10-methylene-5,6,7,8-tetrahydrofolate + glycine + H2O = (6S)-5,6,7,8-tetrahydrofolate + L-serine. Its pathway is one-carbon metabolism; tetrahydrofolate interconversion. It functions in the pathway amino-acid biosynthesis; glycine biosynthesis; glycine from L-serine: step 1/1. In terms of biological role, catalyzes the reversible interconversion of serine and glycine with tetrahydrofolate (THF) serving as the one-carbon carrier. This reaction serves as the major source of one-carbon groups required for the biosynthesis of purines, thymidylate, methionine, and other important biomolecules. Also exhibits THF-independent aldolase activity toward beta-hydroxyamino acids, producing glycine and aldehydes, via a retro-aldol mechanism. The polypeptide is Serine hydroxymethyltransferase (Shewanella pealeana (strain ATCC 700345 / ANG-SQ1)).